We begin with the raw amino-acid sequence, 189 residues long: MEQIDKQKIADAVKVILEAVGENPEREGLIDTPMRVARMYEEVFAGLKKDPSVHFDTIFEEQHEELVLVKDIRFSSMCEHHLVPFFGVAHVAYLPQNGRVAGLSKLARVVDDVSRRPQLQERITTTVAEIMMDKLKPLGVMVIMEAEHMCMTIRGVNKPGTKTITSAVRGAFKNDDKLRSEVLALIKHN.

Residues C78, H81, and C150 each contribute to the Zn(2+) site.

Belongs to the GTP cyclohydrolase I family. In terms of assembly, toroid-shaped homodecamer, composed of two pentamers of five dimers.

The enzyme catalyses GTP + H2O = 7,8-dihydroneopterin 3'-triphosphate + formate + H(+). It functions in the pathway cofactor biosynthesis; 7,8-dihydroneopterin triphosphate biosynthesis; 7,8-dihydroneopterin triphosphate from GTP: step 1/1. The protein is GTP cyclohydrolase 1 of Listeria innocua serovar 6a (strain ATCC BAA-680 / CLIP 11262).